We begin with the raw amino-acid sequence, 577 residues long: Laccase-25 (577 aa).

Positions 1-22 are cleaved as a signal peptide; sequence MTLHWSLLLFIAIALVSSVAQA. Plastocyanin-like domains are found at residues 30–147 and 158–313; these read NVGN…PRGG and KEHV…YAGA. The N-linked (GlcNAc...) asparagine glycan is linked to Asn-33. His-81 and His-83 together coordinate Cu cation. N-linked (GlcNAc...) asparagine glycosylation is present at Asn-109. 2 residues coordinate Cu cation: His-126 and His-128. Asn-169, Asn-203, Asn-208, Asn-218, Asn-332, Asn-383, Asn-396, Asn-404, Asn-441, and Asn-459 each carry an N-linked (GlcNAc...) asparagine glycan. The Plastocyanin-like 3 domain occupies 423-560; it reads DFPDTPPVVF…AMVLEVLDGP (138 aa). Cu cation contacts are provided by His-477, His-480, His-482, His-539, Cys-540, His-541, and His-545.

The protein belongs to the multicopper oxidase family. Requires Cu cation as cofactor.

It localises to the secreted. The protein resides in the extracellular space. The protein localises to the apoplast. The catalysed reaction is 4 hydroquinone + O2 = 4 benzosemiquinone + 2 H2O. Functionally, lignin degradation and detoxification of lignin-derived products. The sequence is that of Laccase-25 (LAC25) from Oryza sativa subsp. japonica (Rice).